The following is a 221-amino-acid chain: uncharacterized protein (221 aa).

Positions 1–26 (MVRLVPRAFAATVALLAAGFSPATAS) are cleaved as a signal peptide.

This is an uncharacterized protein from Mycobacterium tuberculosis (strain CDC 1551 / Oshkosh).